Reading from the N-terminus, the 247-residue chain is ATP synthase subunit a, chloroplastic (247 aa).

Helical transmembrane passes span 38–58, 95–115, 134–154, 199–219, and 220–240; these read QVLI…IIAV, VPFI…GALL, INTT…AGLT, LVVV…VMFL, and GLFT…AYIG.

This sequence belongs to the ATPase A chain family. As to quaternary structure, F-type ATPases have 2 components, CF(1) - the catalytic core - and CF(0) - the membrane proton channel. CF(1) has five subunits: alpha(3), beta(3), gamma(1), delta(1), epsilon(1). CF(0) has four main subunits: a, b, b' and c.

It is found in the plastid. The protein localises to the chloroplast thylakoid membrane. In terms of biological role, key component of the proton channel; it plays a direct role in the translocation of protons across the membrane. The protein is ATP synthase subunit a, chloroplastic of Morus indica (Mulberry).